Reading from the N-terminus, the 199-residue chain is MLTETEGRAAVKLARKTIEIFLSKGKSPRPDASGVELSPVFEEYRGVFVTLTEGGLLRGCIGHPYPDSTLKEAILDSAISAATRDPRFPTVEQDEMKNILVEVTILTQPEKINASPKELPDKVEIGKHGLIVKQGYCQGLLLPQVAPENDMDSIDFLSHTCMKAGLSPDAWVKGAEVYCFEGQIFKEKEPDGEVIEEKF.

One can recognise an AMMECR1 domain in the interval 5–196 (TEGRAAVKLA…EKEPDGEVIE (192 aa)).

The protein is Protein MM_0484 of Methanosarcina mazei (strain ATCC BAA-159 / DSM 3647 / Goe1 / Go1 / JCM 11833 / OCM 88) (Methanosarcina frisia).